Reading from the N-terminus, the 295-residue chain is Dipeptide transport system permease protein DppC (295 aa).

Helical transmembrane passes span 27–47 (ALIGLIFILIVALISILAPYI), 97–117 (VFAGFIIVLLSCAFGTSLGLI), 132–152 (LIDIMLAIPNLLLTIVVVSIL), 156–178 (LANATLAIAVVSIPSYVRLTRAA), 202–222 (MFIVILPNCLAPLIVQMTMGI), 226–246 (ILELATLGFLGIGAKPPTPEL), and 262–282 (WLVTIPGLVILSLVLAFNLMG). Positions 93 to 282 (TRISVFAGFI…SLVLAFNLMG (190 aa)) constitute an ABC transmembrane type-1 domain.

It belongs to the binding-protein-dependent transport system permease family. OppBC subfamily.

It is found in the cell inner membrane. Functionally, part of the ABC transporter DppBCDF involved in dipeptide transport. Responsible for the translocation of the substrate across the membrane. This Haemophilus influenzae (strain ATCC 51907 / DSM 11121 / KW20 / Rd) protein is Dipeptide transport system permease protein DppC (dppC).